A 185-amino-acid chain; its full sequence is Large ribosomal subunit protein uL5 (185 aa).

This sequence belongs to the universal ribosomal protein uL5 family. In terms of assembly, part of the 50S ribosomal subunit; part of the 5S rRNA/L5/L18/L25 subcomplex. Contacts the 5S rRNA and the P site tRNA. Forms a bridge to the 30S subunit in the 70S ribosome.

This is one of the proteins that bind and probably mediate the attachment of the 5S RNA into the large ribosomal subunit, where it forms part of the central protuberance. In the 70S ribosome it contacts protein S13 of the 30S subunit (bridge B1b), connecting the 2 subunits; this bridge is implicated in subunit movement. Contacts the P site tRNA; the 5S rRNA and some of its associated proteins might help stabilize positioning of ribosome-bound tRNAs. The chain is Large ribosomal subunit protein uL5 from Bartonella henselae (strain ATCC 49882 / DSM 28221 / CCUG 30454 / Houston 1) (Rochalimaea henselae).